Reading from the N-terminus, the 346-residue chain is Anthranilate phosphoribosyltransferase (346 aa).

5-phospho-alpha-D-ribose 1-diphosphate is bound by residues glycine 81, 84-85 (GD), 91-94 (NVST), 109-117 (KHGNRSVSS), and serine 121. Anthranilate is bound at residue glycine 81. Serine 93 contacts Mg(2+). Asparagine 112 contacts anthranilate. Position 167 (arginine 167) interacts with anthranilate. The Mg(2+) site is built by aspartate 226 and glutamate 227.

Belongs to the anthranilate phosphoribosyltransferase family. Homodimer. Mg(2+) serves as cofactor.

The enzyme catalyses N-(5-phospho-beta-D-ribosyl)anthranilate + diphosphate = 5-phospho-alpha-D-ribose 1-diphosphate + anthranilate. The protein operates within amino-acid biosynthesis; L-tryptophan biosynthesis; L-tryptophan from chorismate: step 2/5. In terms of biological role, catalyzes the transfer of the phosphoribosyl group of 5-phosphorylribose-1-pyrophosphate (PRPP) to anthranilate to yield N-(5'-phosphoribosyl)-anthranilate (PRA). This Hahella chejuensis (strain KCTC 2396) protein is Anthranilate phosphoribosyltransferase.